The chain runs to 237 residues: MRFAPQLEQGRLLIRYKRFLADIETDSGELLTIHCPNTGSMLNCMMPGGRVWFSRSSDPKRKLPGTWEISETPQGRLACINTGRANTLVEEALRAGVISELEGFTTLKREVAYGQEKSRVDFRLEYPDGYLYLEVKSVTLGFDDSSVAAFPDAVTQRGARHLRELATLAREGVRAVLLYCVNLTGIDAVRPAKEIDPVYAAALREAIDAGVQILAYGVHLTPDEIVIDRRLQVHWLD.

Belongs to the SfsA family.

This Pseudomonas savastanoi pv. phaseolicola (strain 1448A / Race 6) (Pseudomonas syringae pv. phaseolicola (strain 1448A / Race 6)) protein is Sugar fermentation stimulation protein homolog.